Consider the following 264-residue polypeptide: Tetraspanin-12 (264 aa).

Residues 1–13 are Cytoplasmic-facing; sequence MLRLSNAAVITTN. Residues 14-34 form a helical membrane-spanning segment; it reads AILALIGLAALSFSVYVYVQG. Over 35–45 the chain is Extracellular; it reads PSQCQRFVQNP. Residues 46–66 traverse the membrane as a helical segment; it reads LIVTAALLFFISSLGLIAALY. At 67–75 the chain is on the cytoplasmic side; sequence GSHIIITLY. Residues 76-96 traverse the membrane as a helical segment; it reads LFFLFLSILLLLVLSVFIFLV. Residues 97–228 lie on the Extracellular side of the membrane; sequence TNPTAGKALS…VLKGIRKRWR (132 aa). Asn180 carries N-linked (GlcNAc...) asparagine glycosylation. The helical transmembrane segment at 229-249 threads the bilayer; it reads ILIVVNLLLILLVVFLYSCGC. Over 250 to 264 the chain is Cytoplasmic; sequence CVRKNNRVPWKRRFF.

The protein belongs to the tetraspanin (TM4SF) family.

The protein localises to the membrane. Its function is as follows. May be involved in the regulation of cell differentiation. The protein is Tetraspanin-12 (TET12) of Arabidopsis thaliana (Mouse-ear cress).